The primary structure comprises 1317 residues: ABC transporter C family member 14 (1317 aa).

In terms of domain architecture, ABC transmembrane type-1 1 spans 119–404 (NKYALISNIF…LPEDIYKAIG (286 aa)). A run of 5 helical transmembrane segments spans residues 127 to 147 (IFIT…INYI), 156 to 176 (SILK…GQSI), 249 to 269 (ILIL…VGFG), 341 to 361 (VLFW…VLVS), and 375 to 395 (LDVT…LIYL). The segment at 426–451 (ENNQNINFNNNNNNNNNNKNNNNNDD) is disordered. The span at 427–449 (NNQNINFNNNNNNNNNNKNNNNN) shows a compositional bias: low complexity. The ABC transporter 1 domain maps to 490 to 710 (ENEENIKINE…ISDKNDPNLI (221 aa)). Residue 522 to 529 (GVVGSGKT) coordinates ATP. Helical transmembrane passes span 734-754 (YFSY…FFIG), 778-798 (DSFY…LLMI), 871-891 (LISI…LFII), 969-989 (LEVM…LFTS), and 992-1012 (GLAA…SWGV). An ABC transmembrane type-1 2 domain is found at 744–1027 (LFITISLFFI…LEVKMNSFQR (284 aa)). Positions 1071–1306 (IEFKNVEIKY…PNSKFNKLIK (236 aa)) constitute an ABC transporter 2 domain. 1105 to 1112 (GRTGAGKT) contacts ATP.

It belongs to the ABC transporter superfamily. ABCC family. Conjugate transporter (TC 3.A.1.208) subfamily.

It is found in the membrane. This is ABC transporter C family member 14 (abcC14) from Dictyostelium discoideum (Social amoeba).